The primary structure comprises 119 residues: NADH-quinone oxidoreductase subunit A (119 aa).

3 consecutive transmembrane segments (helical) span residues 9–29, 63–83, and 88–108; these read VLLF…LGYV, LVAI…PWAV, and VGMA…VGFA.

Belongs to the complex I subunit 3 family. NDH-1 is composed of 14 different subunits. Subunits NuoA, H, J, K, L, M, N constitute the membrane sector of the complex.

The protein resides in the cell inner membrane. The catalysed reaction is a quinone + NADH + 5 H(+)(in) = a quinol + NAD(+) + 4 H(+)(out). NDH-1 shuttles electrons from NADH, via FMN and iron-sulfur (Fe-S) centers, to quinones in the respiratory chain. The immediate electron acceptor for the enzyme in this species is believed to be ubiquinone. Couples the redox reaction to proton translocation (for every two electrons transferred, four hydrogen ions are translocated across the cytoplasmic membrane), and thus conserves the redox energy in a proton gradient. The polypeptide is NADH-quinone oxidoreductase subunit A (Verminephrobacter eiseniae (strain EF01-2)).